The sequence spans 559 residues: Dihydroxy-acid dehydratase (559 aa).

Cys-56 serves as a coordination point for [2Fe-2S] cluster. Asp-88 lines the Mg(2+) pocket. Cys-129 is a [2Fe-2S] cluster binding site. Positions 130 and 131 each coordinate Mg(2+). An N6-carboxylysine modification is found at Lys-131. [2Fe-2S] cluster is bound at residue Cys-198. Glu-449 lines the Mg(2+) pocket. The Proton acceptor role is filled by Ser-475.

This sequence belongs to the IlvD/Edd family. In terms of assembly, homodimer. [2Fe-2S] cluster serves as cofactor. Requires Mg(2+) as cofactor.

It catalyses the reaction (2R)-2,3-dihydroxy-3-methylbutanoate = 3-methyl-2-oxobutanoate + H2O. The enzyme catalyses (2R,3R)-2,3-dihydroxy-3-methylpentanoate = (S)-3-methyl-2-oxopentanoate + H2O. It functions in the pathway amino-acid biosynthesis; L-isoleucine biosynthesis; L-isoleucine from 2-oxobutanoate: step 3/4. It participates in amino-acid biosynthesis; L-valine biosynthesis; L-valine from pyruvate: step 3/4. Functions in the biosynthesis of branched-chain amino acids. Catalyzes the dehydration of (2R,3R)-2,3-dihydroxy-3-methylpentanoate (2,3-dihydroxy-3-methylvalerate) into 2-oxo-3-methylpentanoate (2-oxo-3-methylvalerate) and of (2R)-2,3-dihydroxy-3-methylbutanoate (2,3-dihydroxyisovalerate) into 2-oxo-3-methylbutanoate (2-oxoisovalerate), the penultimate precursor to L-isoleucine and L-valine, respectively. This is Dihydroxy-acid dehydratase from Ruthia magnifica subsp. Calyptogena magnifica.